The primary structure comprises 205 residues: Adenylyl-sulfate kinase (205 aa).

31 to 38 (GLSGSGKS) contacts ATP. The Phosphoserine intermediate role is filled by Ser105.

It belongs to the APS kinase family.

It carries out the reaction adenosine 5'-phosphosulfate + ATP = 3'-phosphoadenylyl sulfate + ADP + H(+). The protein operates within sulfur metabolism; hydrogen sulfide biosynthesis; sulfite from sulfate: step 2/3. Functionally, catalyzes the synthesis of activated sulfate. This Shewanella pealeana (strain ATCC 700345 / ANG-SQ1) protein is Adenylyl-sulfate kinase.